We begin with the raw amino-acid sequence, 569 residues long: 3-oxosteroid 1-dehydrogenase (569 aa).

Residue 10–39 (DVVVVGSGAAGMVAALTAAHQGLSTVVVEK) participates in FAD binding. The interval 127-148 (PGGKPTGRSVEPKPFDANKLGP) is disordered.

Belongs to the FAD-dependent oxidoreductase 2 family. 3-oxosteroid dehydrogenase subfamily. Requires FAD as cofactor.

The enzyme catalyses a 3-oxosteroid + A = a 3-oxo-Delta(1)-steroid + AH2. It carries out the reaction a 3-oxo-Delta(4)-steroid + A = a 3-oxo-Delta(1,4)-steroid + AH2. Catalyzes the elimination of the C-1 and C-2 hydrogen atoms of the A-ring from the polycyclic ring structure of 3-ketosteroids. Is also involved in the formation of 1,4-androstadiene-3,17-dione (ADD) from 4-androstene-3,17-dione (AD) to. This is 3-oxosteroid 1-dehydrogenase (ksdD) from Mycolicibacterium smegmatis (strain ATCC 700084 / mc(2)155) (Mycobacterium smegmatis).